A 100-amino-acid chain; its full sequence is Small ribosomal subunit protein uS14 (100 aa).

The protein belongs to the universal ribosomal protein uS14 family. In terms of assembly, part of the 30S ribosomal subunit. Contacts proteins S3 and S10.

Functionally, binds 16S rRNA, required for the assembly of 30S particles and may also be responsible for determining the conformation of the 16S rRNA at the A site. This chain is Small ribosomal subunit protein uS14, found in Trichormus variabilis (strain ATCC 29413 / PCC 7937) (Anabaena variabilis).